Consider the following 179-residue polypeptide: Large ribosomal subunit protein uL6 (179 aa).

Belongs to the universal ribosomal protein uL6 family. In terms of assembly, part of the 50S ribosomal subunit.

Its function is as follows. This protein binds to the 23S rRNA, and is important in its secondary structure. It is located near the subunit interface in the base of the L7/L12 stalk, and near the tRNA binding site of the peptidyltransferase center. This is Large ribosomal subunit protein uL6 from Streptomyces avermitilis (strain ATCC 31267 / DSM 46492 / JCM 5070 / NBRC 14893 / NCIMB 12804 / NRRL 8165 / MA-4680).